A 207-amino-acid polypeptide reads, in one-letter code: Large ribosomal subunit protein uL4 (207 aa).

Residues 44-78 (MRQGTHKTKNRAEVSGGGRKPWRQKGTGRARQGSI) are disordered.

This sequence belongs to the universal ribosomal protein uL4 family. In terms of assembly, part of the 50S ribosomal subunit.

Functionally, one of the primary rRNA binding proteins, this protein initially binds near the 5'-end of the 23S rRNA. It is important during the early stages of 50S assembly. It makes multiple contacts with different domains of the 23S rRNA in the assembled 50S subunit and ribosome. This protein when expressed in E.coli represses the endogenous S10 operon; this may not occur in B.stearothermophilus however. In terms of biological role, forms part of the polypeptide exit tunnel. The protein is Large ribosomal subunit protein uL4 (rplD) of Geobacillus stearothermophilus (Bacillus stearothermophilus).